A 606-amino-acid polypeptide reads, in one-letter code: MPYEIKKVFASLPQVERGVSKILGGDPKGDHFLYTNGKCVILRNIDNPAIADIYTEHAHQVVVAKYAPSGFYIASGDISGKLRIWDTTQKEHLLKYEYQPFAGKIKDIAWTEDSKRIAVVGEGREKFGAVFLWDTGSSVGEITGHNKVINSVDIKQTRPYRLATGSDDNCAAFFEGPPFKFKFTIGDHSRFVNCVRFSPDGNRFATASADGQIFIYDGKTGEKVCALGESKAHDGGIYAISWSPDSTHLLSASGDKTSKIWDVNVNSVVSTFPMGSNVLDQQLGCLWQKDHLLSISLSGYINYLDKNNPSKPLRVIKGHSKSIQCLTVHRNGGKSYIYSGSHDGHINYWDSETGENDSFSGKGHTNQVSRMTVNESEQLVSCSMDDTVRYTNLTLRDYSGQGVVKLDVQPKCVAVGPGGYTVVVCIGQIVLLKDQKKCFSIDNPGYEPEVVAVHPGGDTVAVGGTDGNVRVYSILASTLKDEGKLLEAKGPVTDVAYSHDGAFLAVCDASKVVTVFSVADGYSENNVFYGHHAKIVCLAWSPDNEHFASGGMDMMVYVWTLSDPETKVKIQDAHRLHHVSSLAWLDEHTLVTTSHDASVKEWTITY.

13 WD repeats span residues 4–45 (EIKK…LRNI), 48–87 (PAIA…IWDT), 93–135 (LLKY…LWDT), 138–176 (SVGE…FFEG), 180–218 (KFKF…IYDG), 224–263 (VCAL…IWDV), 270–306 (STFP…YLDK), 311–351 (KPLR…YWDS), 358–408 (SFSG…KLDV), 432–474 (LKDQ…VYSI), 480–518 (KDEG…VFSV), 523–561 (SENN…VWTL), and 566–604 (TKVK…EWTI). N6-acetyllysine occurs at positions 28, 81, 95, and 115. Residue Tyr238 is modified to Phosphotyrosine. N6-acetyllysine is present on Lys480.

It belongs to the WD repeat AIP1 family.

Its subcellular location is the cytoplasm. The protein resides in the cytoskeleton. It is found in the cell projection. It localises to the podosome. Induces disassembly of actin filaments in conjunction with ADF/cofilin family proteins. Enhances cofilin-mediated actin severing. Involved in cytokinesis. Involved in chemotactic cell migration by restricting lamellipodial membrane protrusions. Involved in myocardium sarcomere organization. Required for cardiomyocyte growth at the postnatal and maintenance at the adult stage. Involved in neutrophil actin dynamics and migration. Involved in megakaryocyte maturation and platelet shedding. Required for the establishment of planar cell polarity (PCP) during follicular epithelium development and for cell shape changes during PCP; the function seems to implicate cooperation with CFL1 and/or DSTN/ADF. Involved in the generation/maintenance of cortical tension. Involved in assembly and maintenance of epithelial apical cell junctions and plays a role in the organization of the perijunctional actomyosin belt. In Mus musculus (Mouse), this protein is WD repeat-containing protein 1 (Wdr1).